The sequence spans 97 residues: Co-chaperonin GroES (97 aa).

Belongs to the GroES chaperonin family. Heptamer of 7 subunits arranged in a ring. Interacts with the chaperonin GroEL.

Its subcellular location is the cytoplasm. Functionally, together with the chaperonin GroEL, plays an essential role in assisting protein folding. The GroEL-GroES system forms a nano-cage that allows encapsulation of the non-native substrate proteins and provides a physical environment optimized to promote and accelerate protein folding. GroES binds to the apical surface of the GroEL ring, thereby capping the opening of the GroEL channel. The sequence is that of Co-chaperonin GroES from Proteus mirabilis (strain HI4320).